The chain runs to 608 residues: MGFKKMFKKKDPTESEIRESMQDAGLLVKTDVNGYNRNKFDAYKNYAAQVTQKSSAAPPAARSNPYAVQNQQPSGGNPYAAAAAGGASGSPYGGSDPYSNGGGGNGGSNSNGGSNSNGGSNGSPYKMNNGGNNAAPPPATNSPYSMPQNGAPPKESPAKSSKFKRFGRSKKEEAPPPLEDPRLRPRQYVAPTDYNDAERDDYEPVYDVGLPEEPELPPPPMPGAVNPYASANQGYGSRFGNVDRELEEDKTALFGPRDDPPMDSSYNPALSEQPKYAESVMSMPRQELSQKVRQKEPPAAPAPQTAAVAEYSEATVAVDEEEDLLLGGGSTLNLGRVDSYSYGNEQEYGKQNYTYNYNQGHEFDTVLEEEEKTEQEQEDEDVEAVKQQIRFTKQQSAASTRNALRHAAEAEESGRNTLGMLGSQGERLYNIHSTLALATTQHKIAEDKAKELKTVTRSMFAPHVSNPFNSKRRAQEKEDRIRRERAVAQVEREQRRRDAYDSQQRVVGALDGVGEKSKHRKEMMSKYGSRPGRDRYQFEADEEDDILEDEIDNNLDELSNAAGRLKKLGLAMNEEVEQQNEKLDQIAEQTDDLDISVHLNTARLAGIH.

2 disordered regions span residues 1 to 23 (MGFKKMFKKKDPTESEIRESMQD) and 50 to 307 (VTQK…QTAA). Positions 9-21 (KKDPTESEIRESM) are enriched in basic and acidic residues. Low complexity-rich tracts occupy residues 54-67 (SSAAPPAARSNPYA) and 74-85 (SGGNPYAAAAAG). Residues 100–121 (NGGGGNGGSNSNGGSNSNGGSN) are compositionally biased toward gly residues. The span at 122-134 (GSPYKMNNGGNNA) shows a compositional bias: low complexity. The span at 169-183 (SKKEEAPPPLEDPRL) shows a compositional bias: basic and acidic residues. A compositionally biased stretch (acidic residues) spans 198-215 (ERDDYEPVYDVGLPEEPE). A compositionally biased stretch (basic and acidic residues) spans 241–260 (NVDRELEEDKTALFGPRDDP). One can recognise a t-SNARE coiled-coil homology 1 domain in the interval 390–452 (RFTKQQSAAS…KIAEDKAKEL (63 aa)). Positions 514-533 (GEKSKHRKEMMSKYGSRPGR) are disordered. The t-SNARE coiled-coil homology 2 domain maps to 545–607 (DILEDEIDNN…HLNTARLAGI (63 aa)).

This sequence belongs to the SNAP-25 family.

The polypeptide is Protein transport protein SEC9 (SEC9) (Yarrowia lipolytica (strain CLIB 122 / E 150) (Yeast)).